A 334-amino-acid polypeptide reads, in one-letter code: UDP-glucose 4-epimerase (334 aa).

Residues 11-12 (YI), 31-36 (DNLQKG), 50-51 (DI), 72-76 (FAANS), asparagine 91, threonine 116, tyrosine 140, lysine 144, and phenylalanine 168 each bind NAD(+). Residues threonine 116 and tyrosine 140 each coordinate substrate. Catalysis depends on tyrosine 140, which acts as the Proton acceptor. Residues asparagine 169, 188–189 (HL), 205–207 (AIF), arginine 220, and 281–284 (RSGD) each bind substrate.

It belongs to the NAD(P)-dependent epimerase/dehydratase family. Homodimer. The cofactor is NAD(+).

It carries out the reaction UDP-alpha-D-glucose = UDP-alpha-D-galactose. It functions in the pathway carbohydrate metabolism; galactose metabolism. In terms of biological role, involved in the metabolism of galactose. Catalyzes the conversion of UDP-galactose (UDP-Gal) to UDP-glucose (UDP-Glc) through a mechanism involving the transient reduction of NAD. The polypeptide is UDP-glucose 4-epimerase (galE) (Halalkalibacterium halodurans (strain ATCC BAA-125 / DSM 18197 / FERM 7344 / JCM 9153 / C-125) (Bacillus halodurans)).